The following is a 474-amino-acid chain: PTS system N-acetylmuramic acid-specific EIIBC component (474 aa).

The PTS EIIB type-1 domain maps to 1–89 (MAKEISSELL…SELLGEAPVQ (89 aa)). Residues 1 to 123 (MAKEISSELL…LAKFATIFTP (123 aa)) lie on the Cytoplasmic side of the membrane. The active-site Phosphocysteine intermediate; for EIIB activity is the C29. A PTS EIIC type-1 domain is found at 115 to 474 (AKFATIFTPL…LFGCRNVNLD (360 aa)). The helical transmembrane segment at 124 to 144 (LIPGFIAAGLLLGIATLIATV) threads the bilayer. Topologically, residues 145 to 157 (MHVPADAQGTLPD) are periplasmic. A helical transmembrane segment spans residues 158–178 (ALNFMKVFSKGLFTFLVILVG). Residues 179–180 (YN) lie on the Cytoplasmic side of the membrane. The helical transmembrane segment at 181-201 (AAQAFGGTGVNGAIIAALFLL) threads the bilayer. Residues 202-217 (GYNPAATTGYYAGFHD) lie on the Periplasmic side of the membrane. Residues 218-238 (FFGLPIDPRGNIIGVLIAAWA) form a helical membrane-spanning segment. Residues 239–260 (CARIEGMVRRFMPDDLDMLLTS) are Cytoplasmic-facing. A helical transmembrane segment spans residues 261–281 (LITLLITATLAYLIIMPLGGW). Residues 282–301 (LFEGMSWLFMHLNSNPFGCA) lie on the Periplasmic side of the membrane. A helical transmembrane segment spans residues 302-322 (VLAGLFLIAVVFGVHQGFIPV). Residues 323–334 (YLALMDSQGFNS) lie on the Cytoplasmic side of the membrane. Residues 335–355 (LFPILSMAGAGQVGAALALYW) form a helical membrane-spanning segment. Over 356 to 368 (RAQPHSALRSQVR) the chain is Periplasmic. The helical transmembrane segment at 369-389 (GAIIPGLLGVGEPLIYGVTLP) threads the bilayer. Residues 390–393 (RMKP) lie on the Cytoplasmic side of the membrane. Residues 394-414 (FVTACLGGAAGGLFIGLIAWW) form a helical membrane-spanning segment. The Periplasmic portion of the chain corresponds to 415-440 (GLPMGLNSAFGPSGLVALPLMTSAQG). Residues 441 to 461 (ILPAMAVYAGGILVAWVCGFI) traverse the membrane as a helical segment. Over 462 to 474 (FTTLFGCRNVNLD) the chain is Cytoplasmic.

Its subcellular location is the cell inner membrane. The enzyme catalyses N-acetyl-beta-D-muramate(out) + N(pros)-phospho-L-histidyl-[protein] = N-acetyl-beta-D-muramate 6-phosphate(in) + L-histidyl-[protein]. The phosphoenolpyruvate-dependent sugar phosphotransferase system (sugar PTS), a major carbohydrate active transport system, catalyzes the phosphorylation of incoming sugar substrates concomitantly with their translocation across the cell membrane. This system is involved in N-acetylmuramic acid (MurNAc) transport, yielding cytoplasmic MurNAc-6-P. Is responsible for growth on MurNAc as the sole source of carbon and energy. Is also able to take up anhydro-N-acetylmuramic acid (anhMurNAc), but cannot phosphorylate the carbon 6, probably because of the 1,6-anhydro ring. The protein is PTS system N-acetylmuramic acid-specific EIIBC component (murP) of Escherichia coli (strain K12).